The following is a 397-amino-acid chain: Acetate kinase (397 aa).

N7 is a Mg(2+) binding site. ATP is bound at residue K14. Residue R91 coordinates substrate. Catalysis depends on D148, which acts as the Proton donor/acceptor. Residues 208 to 212 (HIGNG), 283 to 285 (DMR), and 331 to 335 (GVGEN) contribute to the ATP site. Mg(2+) is bound at residue E384.

The protein belongs to the acetokinase family. Homodimer. It depends on Mg(2+) as a cofactor. Requires Mn(2+) as cofactor.

It is found in the cytoplasm. The enzyme catalyses acetate + ATP = acetyl phosphate + ADP. Its pathway is metabolic intermediate biosynthesis; acetyl-CoA biosynthesis; acetyl-CoA from acetate: step 1/2. In terms of biological role, catalyzes the formation of acetyl phosphate from acetate and ATP. Can also catalyze the reverse reaction. This Azobacteroides pseudotrichonymphae genomovar. CFP2 protein is Acetate kinase.